The primary structure comprises 283 residues: Thymidylate synthase (283 aa).

Arginine 22 is a dUMP binding site. The active-site Nucleophile is cysteine 160. Residues 180 to 183, asparagine 191, and 221 to 223 each bind dUMP; these read RSCD and HIY. A (6R)-5,10-methylene-5,6,7,8-tetrahydrofolate-binding site is contributed by aspartate 183. Serine 282 is a (6R)-5,10-methylene-5,6,7,8-tetrahydrofolate binding site.

Belongs to the thymidylate synthase family. Bacterial-type ThyA subfamily. In terms of assembly, homodimer.

It localises to the cytoplasm. The catalysed reaction is dUMP + (6R)-5,10-methylene-5,6,7,8-tetrahydrofolate = 7,8-dihydrofolate + dTMP. It functions in the pathway pyrimidine metabolism; dTTP biosynthesis. Catalyzes the reductive methylation of 2'-deoxyuridine-5'-monophosphate (dUMP) to 2'-deoxythymidine-5'-monophosphate (dTMP) while utilizing 5,10-methylenetetrahydrofolate (mTHF) as the methyl donor and reductant in the reaction, yielding dihydrofolate (DHF) as a by-product. This enzymatic reaction provides an intracellular de novo source of dTMP, an essential precursor for DNA biosynthesis. This Vibrio vulnificus (strain YJ016) protein is Thymidylate synthase.